A 413-amino-acid chain; its full sequence is Alpha-1-antitrypsin 1-4 (413 aa).

An N-terminal signal peptide occupies residues 1-24 (MTPSISWSLLLLAGLCCLVPSFLA). Asparagine 64, asparagine 101, and asparagine 265 each carry an N-linked (GlcNAc...) asparagine glycan. The tract at residues 368 to 387 (AATVLQVATYSMPPIVRFDH) is RCL.

Belongs to the serpin family.

The protein resides in the secreted. Functionally, inhibitor of serine proteases. Can inhibit trypsin and chymotrypsin; relatively ineffective against elastase. The protein is Alpha-1-antitrypsin 1-4 (Serpina1d) of Mus musculus (Mouse).